The chain runs to 504 residues: Maturase K (504 aa).

This sequence belongs to the intron maturase 2 family. MatK subfamily.

Its subcellular location is the plastid. It localises to the chloroplast. Its function is as follows. Usually encoded in the trnK tRNA gene intron. Probably assists in splicing its own and other chloroplast group II introns. This Aucuba japonica (Japanese laurel) protein is Maturase K.